The chain runs to 274 residues: Large ribosomal subunit protein uL2c (274 aa).

The tract at residues 230–252 is disordered; the sequence is HPHGGGEGRSPIGRSKPLTPWGK.

This sequence belongs to the universal ribosomal protein uL2 family. As to quaternary structure, part of the 50S ribosomal subunit.

Its subcellular location is the plastid. The sequence is that of Large ribosomal subunit protein uL2c (rpl2) from Euglena longa (Euglenophycean alga).